Consider the following 230-residue polypeptide: 2-C-methyl-D-erythritol 4-phosphate cytidylyltransferase (230 aa).

This sequence belongs to the IspD/TarI cytidylyltransferase family. IspD subfamily.

The enzyme catalyses 2-C-methyl-D-erythritol 4-phosphate + CTP + H(+) = 4-CDP-2-C-methyl-D-erythritol + diphosphate. Its pathway is isoprenoid biosynthesis; isopentenyl diphosphate biosynthesis via DXP pathway; isopentenyl diphosphate from 1-deoxy-D-xylulose 5-phosphate: step 2/6. Its function is as follows. Catalyzes the formation of 4-diphosphocytidyl-2-C-methyl-D-erythritol from CTP and 2-C-methyl-D-erythritol 4-phosphate (MEP). This chain is 2-C-methyl-D-erythritol 4-phosphate cytidylyltransferase, found in Laribacter hongkongensis (strain HLHK9).